Reading from the N-terminus, the 363-residue chain is Tetraacyldisaccharide 4'-kinase (363 aa).

78–85 contacts ATP; it reads TVGGNGKT.

Belongs to the LpxK family.

The catalysed reaction is a lipid A disaccharide + ATP = a lipid IVA + ADP + H(+). The protein operates within glycolipid biosynthesis; lipid IV(A) biosynthesis; lipid IV(A) from (3R)-3-hydroxytetradecanoyl-[acyl-carrier-protein] and UDP-N-acetyl-alpha-D-glucosamine: step 6/6. Functionally, transfers the gamma-phosphate of ATP to the 4'-position of a tetraacyldisaccharide 1-phosphate intermediate (termed DS-1-P) to form tetraacyldisaccharide 1,4'-bis-phosphate (lipid IVA). The protein is Tetraacyldisaccharide 4'-kinase of Wigglesworthia glossinidia brevipalpis.